Here is a 467-residue protein sequence, read N- to C-terminus: Pentatricopeptide repeat-containing protein At1g77170, mitochondrial (467 aa).

A mitochondrion-targeting transit peptide spans 1-30 (MFFSGLISKLHVHGTKRTNHFTIFHRLNHF). PPR repeat units lie at residues 81–115 (IAFLWNNIMRSYIRHESPLDAIQVYLGMVRSTVLP), 116–150 (DRYSLPIVIKAAVQIHDFTLGKELHSVAVRLGFVG), 151–181 (DEFCESGFITLYCKAGEFENARKVFDENPER), 182–216 (KLGSWNAIIGGLNHAGRANEAVEMFVDMKRSGLEP), 217–251 (DDFTMVSVTASCGGLGDLSLAFQLHKCVLQAKTEE), 254–284 (DIMMLNSLIDMYGKCGRMDLASHIFEEMRQR), 285–319 (NVVSWSSMIVGYAANGNTLEALECFRQMREFGVRP), 320–350 (NKITFVGVLSACVHGGLVEEGKTYFAMMKSE), and 356–386 (GLSHYGCIVDLLSRDGQLKEAKKVVEEMPMK). The interval 391–466 (VWGCLMGGCE…IPAYSYASTT (76 aa)) is type E motif.

It belongs to the PPR family. PCMP-E subfamily.

The protein localises to the mitochondrion. The sequence is that of Pentatricopeptide repeat-containing protein At1g77170, mitochondrial (PCMP-E21) from Arabidopsis thaliana (Mouse-ear cress).